A 319-amino-acid polypeptide reads, in one-letter code: MITLLFLLVVGAQAQHEWTYSEGVLDEKHWRLQYPDCGGTRQSPIDLKMKKVRYNPSLRALNLTGYGLRQGEFPMTNNGHTVQISLPSSMRMTTSDGSQYLAKQMHFHWGGDSSEISGSEHTVDGMRYIIEIHVVHYHSKYGSYEEAQNEPDGLAVLAALVEVKDYAENTYYSNFISHLEDIRYAGQSTVLRDLDIQDMLPGDLRYYYSYLGSLTTPSCTENVHWFVVADTVKLSKTQIEKLENSLLNHQNETIQNNYRSTQPLNHRVVEANFVSHPHQEYTLGSKLHFYLNNIDQNLEYLRRFIEQKITKRKKEKYWP.

The N-terminal stretch at 1–14 (MITLLFLLVVGAQA) is a signal peptide. In terms of domain architecture, Alpha-carbonic anhydrase spans 16–273 (HEWTYSEGVL…LNHRVVEANF (258 aa)). A disulfide bond links Cys37 and Cys219. Residue Asn62 is glycosylated (N-linked (GlcNAc...) asparagine). His80 acts as the Proton donor/acceptor in catalysis. Residues His106, His108, and His133 each coordinate Zn(2+). 215–216 (TT) provides a ligand contact to substrate. A glycan (N-linked (GlcNAc...) asparagine) is linked at Asn251.

It belongs to the alpha-carbonic anhydrase family. Requires Zn(2+) as cofactor. As to expression, major constituent of saliva.

The protein localises to the secreted. The catalysed reaction is hydrogencarbonate + H(+) = CO2 + H2O. Reversible hydration of carbon dioxide. Its role in saliva is unknown. The chain is Carbonic anhydrase 6 (CA6) from Bos taurus (Bovine).